Here is a 122-residue protein sequence, read N- to C-terminus: Small ribosomal subunit protein uS13 (122 aa).

Residues 95 to 122 form a disordered region; it reads GLPVHGQRTHTNARTRKGPRRGAVGKKK.

Belongs to the universal ribosomal protein uS13 family. In terms of assembly, part of the 30S ribosomal subunit. Forms a loose heterodimer with protein S19. Forms two bridges to the 50S subunit in the 70S ribosome.

Located at the top of the head of the 30S subunit, it contacts several helices of the 16S rRNA. In the 70S ribosome it contacts the 23S rRNA (bridge B1a) and protein L5 of the 50S subunit (bridge B1b), connecting the 2 subunits; these bridges are implicated in subunit movement. Contacts the tRNAs in the A and P-sites. The chain is Small ribosomal subunit protein uS13 from Nitratidesulfovibrio vulgaris (strain DSM 19637 / Miyazaki F) (Desulfovibrio vulgaris).